We begin with the raw amino-acid sequence, 423 residues long: Enolase (423 aa).

Position 165 (Gln165) interacts with (2R)-2-phosphoglycerate. Glu209 serves as the catalytic Proton donor. Asp244, Glu285, and Asp310 together coordinate Mg(2+). Residues Lys335, Arg364, Ser365, and Lys386 each coordinate (2R)-2-phosphoglycerate. Catalysis depends on Lys335, which acts as the Proton acceptor.

It belongs to the enolase family. As to quaternary structure, homooctamer formed by a tetramer of dimers. Mg(2+) is required as a cofactor.

It localises to the cytoplasm. The protein localises to the secreted. The protein resides in the cell surface. The enzyme catalyses (2R)-2-phosphoglycerate = phosphoenolpyruvate + H2O. Its pathway is carbohydrate degradation; glycolysis; pyruvate from D-glyceraldehyde 3-phosphate: step 4/5. The covalent binding to the substrate causes inactivation of the enzyme, and possibly serves as a signal for the export of the protein. In terms of biological role, catalyzes the reversible conversion of 2-phosphoglycerate (2-PG) into phosphoenolpyruvate (PEP). It is essential for the degradation of carbohydrates via glycolysis. The chain is Enolase from Methanocaldococcus jannaschii (strain ATCC 43067 / DSM 2661 / JAL-1 / JCM 10045 / NBRC 100440) (Methanococcus jannaschii).